The following is an 83-amino-acid chain: MAAGSTGERPFFEIITSIRYWVIHAVTLPAIFLAGFLFVSTGLAYDAFGTPRPDSYFQAADVKAPVVSQRYEGKSQLDTRLKN.

The chain crosses the membrane as a helical span at residues 22 to 36 (VIHAVTLPAIFLAGF). Residue His24 participates in heme binding.

Belongs to the PsbE/PsbF family. Heterodimer of an alpha subunit and a beta subunit. PSII is composed of 1 copy each of membrane proteins PsbA, PsbB, PsbC, PsbD, PsbE, PsbF, PsbH, PsbI, PsbJ, PsbK, PsbL, PsbM, PsbT, PsbX, PsbY, PsbZ, Psb30/Ycf12, peripheral proteins PsbO, CyanoQ (PsbQ), PsbU, PsbV and a large number of cofactors. It forms dimeric complexes. Requires heme b as cofactor.

It is found in the cellular thylakoid membrane. In terms of biological role, this b-type cytochrome is tightly associated with the reaction center of photosystem II (PSII). PSII is a light-driven water:plastoquinone oxidoreductase that uses light energy to abstract electrons from H(2)O, generating O(2) and a proton gradient subsequently used for ATP formation. It consists of a core antenna complex that captures photons, and an electron transfer chain that converts photonic excitation into a charge separation. This Synechococcus sp. (strain RCC307) protein is Cytochrome b559 subunit alpha.